A 325-amino-acid chain; its full sequence is Metacaspase-9 (325 aa).

Catalysis depends on residues His-95 and Cys-147. Cys-147 is modified (S-nitrosocysteine). Asn-177 is a glycosylation site (N-linked (GlcNAc...) asparagine).

It belongs to the peptidase C14B family. In terms of processing, the two subunits are derived from the precursor sequence by an autocatalytic mechanism. Post-translationally, S-nitrosylation at Cys-147 suppresses both autoprocessing and proteolytic activity of the full-length protein, but does not affect the activity of the mature processed form. Expressed in root tips, cauline leaves, flowers and siliques.

Its subcellular location is the secreted. The protein localises to the extracellular space. The protein resides in the apoplast. Its activity is regulated as follows. Inhibited by serpin ZX and nitric oxide through cysteine nitrosylation. Cysteine protease that cleaves specifically after arginine or lysine residues. Does not cleave caspase-specific substrates. Required for proteolytic processing of GRI. The protein is Metacaspase-9 (AMC9) of Arabidopsis thaliana (Mouse-ear cress).